We begin with the raw amino-acid sequence, 403 residues long: Blue light- and temperature-regulated antirepressor BluF (403 aa).

The BLUF domain maps to 2 to 93; that stretch reads LTTLIYRSHI…ARRFGKAGME (92 aa). The tract at residues 98 to 144 is joining helix; that stretch reads RLHERDDVLQAVFDKGTSKFQLTYDDRALQFFRTFVLATEQSTYFEI. The EAL domain maps to 155–403; that stretch reads DGSDKELDSC…IPSIAWPEKK (249 aa).

Monomer, it undergoes transient dimerization following photoexcitation or upon temperature reduction, with a relaxation time of about 2 minutes. The dimer may be the inactive state. Interacts with the N- and C-terminal domains of BluR. Can also interact with the C-terminal domain of MlrA. The cofactor is FAD.

Its function is as follows. Binds to and releases the BluR repressor from its bound DNA target in a blue light-dependent (470 nm) fashion. A shift to low temperature also triggers a BluF-mediated relief of repression by BluR, suggesting BluF may serve as a thermometer. Blue light may act to increase the affinity of BluF for BluR, allowing it to be released from its operator. The protein has a reversible photocycle, and undergoes structural changes, probably in the EAL domain, in response to light. In Escherichia coli (strain K12), this protein is Blue light- and temperature-regulated antirepressor BluF.